A 466-amino-acid polypeptide reads, in one-letter code: Putative D-3-phosphoglycerate dehydrogenase (466 aa).

Positions Met-1 to Leu-15 are enriched in basic and acidic residues. The tract at residues Met-1–Asn-26 is disordered. Residues Asn-16–Asn-26 show a composition bias toward polar residues. Ser-87 is modified (phosphoserine). NAD(+)-binding positions include His-205 to Ile-206 and Asp-225. Ser-258 carries the phosphoserine modification. NAD(+) contacts are provided by residues Ala-282–Arg-284 and Asp-308. Arg-284 is a catalytic residue. Residue Glu-313 is part of the active site. Catalysis depends on His-344, which acts as the Proton donor. Residue His-344–Gly-347 coordinates NAD(+). Residues Arg-396–Tyr-466 enclose the ACT domain.

The protein belongs to the D-isomer specific 2-hydroxyacid dehydrogenase family.

It carries out the reaction (2R)-3-phosphoglycerate + NAD(+) = 3-phosphooxypyruvate + NADH + H(+). The enzyme catalyses (R)-2-hydroxyglutarate + NAD(+) = 2-oxoglutarate + NADH + H(+). The protein operates within amino-acid biosynthesis; L-serine biosynthesis; L-serine from 3-phospho-D-glycerate: step 1/3. In terms of biological role, catalyzes the reversible oxidation of 3-phospho-D-glycerate to 3-phosphonooxypyruvate, the first step of the phosphorylated L-serine biosynthesis pathway. Also catalyzes the reversible oxidation of 2-hydroxyglutarate to 2-oxoglutarate. This Schizosaccharomyces pombe (strain 972 / ATCC 24843) (Fission yeast) protein is Putative D-3-phosphoglycerate dehydrogenase.